Here is a 303-residue protein sequence, read N- to C-terminus: Probable porphobilinogen deaminase (303 aa).

At C233 the chain carries S-(dipyrrolylmethanemethyl)cysteine.

This sequence belongs to the HMBS family. Dipyrromethane serves as cofactor.

The catalysed reaction is 4 porphobilinogen + H2O = hydroxymethylbilane + 4 NH4(+). It functions in the pathway porphyrin-containing compound metabolism; protoporphyrin-IX biosynthesis; coproporphyrinogen-III from 5-aminolevulinate: step 2/4. Functionally, tetrapolymerization of the monopyrrole PBG into the hydroxymethylbilane pre-uroporphyrinogen in several discrete steps. This is Probable porphobilinogen deaminase from Methanocella arvoryzae (strain DSM 22066 / NBRC 105507 / MRE50).